Consider the following 104-residue polypeptide: uncharacterized protein (104 aa).

A disordered region spans residues 51–70 (NPGRSLDNNKDVSDKGRSEF). Over residues 57–70 (DNNKDVSDKGRSEF) the composition is skewed to basic and acidic residues.

This sequence belongs to the protein-tyrosine phosphatase family.

This is an uncharacterized protein from Xanthomonas campestris pv. campestris (strain ATCC 33913 / DSM 3586 / NCPPB 528 / LMG 568 / P 25).